The primary structure comprises 171 residues: ATP synthase subunit b (171 aa).

A helical membrane pass occupies residues F2 to L22.

It belongs to the ATPase B chain family. F-type ATPases have 2 components, F(1) - the catalytic core - and F(0) - the membrane proton channel. F(1) has five subunits: alpha(3), beta(3), gamma(1), delta(1), epsilon(1). F(0) has three main subunits: a(1), b(2) and c(10-14). The alpha and beta chains form an alternating ring which encloses part of the gamma chain. F(1) is attached to F(0) by a central stalk formed by the gamma and epsilon chains, while a peripheral stalk is formed by the delta and b chains.

It localises to the cell inner membrane. F(1)F(0) ATP synthase produces ATP from ADP in the presence of a proton or sodium gradient. F-type ATPases consist of two structural domains, F(1) containing the extramembraneous catalytic core and F(0) containing the membrane proton channel, linked together by a central stalk and a peripheral stalk. During catalysis, ATP synthesis in the catalytic domain of F(1) is coupled via a rotary mechanism of the central stalk subunits to proton translocation. Functionally, component of the F(0) channel, it forms part of the peripheral stalk, linking F(1) to F(0). The sequence is that of ATP synthase subunit b from Helicobacter pylori (strain ATCC 700392 / 26695) (Campylobacter pylori).